Consider the following 207-residue polypeptide: MEKKIPRPVIKRLGLYYRCLNRLYEEGIEYVASKDIAERLGIKSSQVRKDLSYFGEFGKRGVGYNTYELMERLEDIIGVNKYWNVIVIGAGNIGSAIANYEGLRKEKFNVIGIFDADRSKVGRKIGRLIVKHFSEIDDFFKKNIVEIAVLAVPENAAQMVVDKLEELGIKGIVNFAPVKLRTNIPVEDVDITLSFKSLSFKIERNIE.

A DNA-binding region (H-T-H motif) is located at residues Leu-15–Phe-54. Gly-89 to Gly-94 contributes to the NAD(+) binding site.

It belongs to the transcriptional regulatory Rex family. In terms of assembly, homodimer.

It is found in the cytoplasm. In terms of biological role, modulates transcription in response to changes in cellular NADH/NAD(+) redox state. The sequence is that of Redox-sensing transcriptional repressor Rex from Thermosipho africanus (strain TCF52B).